A 521-amino-acid polypeptide reads, in one-letter code: Bifunctional purine biosynthesis protein PurH (521 aa).

The region spanning 1–145 is the MGS-like domain; the sequence is MIKQALISVS…KNHRDVTVVV (145 aa).

It belongs to the PurH family.

The enzyme catalyses (6R)-10-formyltetrahydrofolate + 5-amino-1-(5-phospho-beta-D-ribosyl)imidazole-4-carboxamide = 5-formamido-1-(5-phospho-D-ribosyl)imidazole-4-carboxamide + (6S)-5,6,7,8-tetrahydrofolate. It carries out the reaction IMP + H2O = 5-formamido-1-(5-phospho-D-ribosyl)imidazole-4-carboxamide. It functions in the pathway purine metabolism; IMP biosynthesis via de novo pathway; 5-formamido-1-(5-phospho-D-ribosyl)imidazole-4-carboxamide from 5-amino-1-(5-phospho-D-ribosyl)imidazole-4-carboxamide (10-formyl THF route): step 1/1. Its pathway is purine metabolism; IMP biosynthesis via de novo pathway; IMP from 5-formamido-1-(5-phospho-D-ribosyl)imidazole-4-carboxamide: step 1/1. The polypeptide is Bifunctional purine biosynthesis protein PurH (Burkholderia orbicola (strain AU 1054)).